Reading from the N-terminus, the 286-residue chain is Bifunctional protein FolD (286 aa).

NADP(+)-binding positions include 166 to 168 (GAS) and Ile-232.

This sequence belongs to the tetrahydrofolate dehydrogenase/cyclohydrolase family. Homodimer.

The enzyme catalyses (6R)-5,10-methylene-5,6,7,8-tetrahydrofolate + NADP(+) = (6R)-5,10-methenyltetrahydrofolate + NADPH. The catalysed reaction is (6R)-5,10-methenyltetrahydrofolate + H2O = (6R)-10-formyltetrahydrofolate + H(+). Its pathway is one-carbon metabolism; tetrahydrofolate interconversion. Functionally, catalyzes the oxidation of 5,10-methylenetetrahydrofolate to 5,10-methenyltetrahydrofolate and then the hydrolysis of 5,10-methenyltetrahydrofolate to 10-formyltetrahydrofolate. This is Bifunctional protein FolD from Vibrio cholerae serotype O1 (strain ATCC 39541 / Classical Ogawa 395 / O395).